The sequence spans 1035 residues: Glycine dehydrogenase (decarboxylating), mitochondrial (1035 aa).

A mitochondrion-targeting transit peptide spans 1-64; sequence MERARKLANR…KSFNTQQARS (64 aa). N6-(pyridoxal phosphate)lysine is present on lysine 771.

Belongs to the GcvP family. As to quaternary structure, homodimer. The glycine cleavage system is composed of four proteins: P, T, L and H. It depends on pyridoxal 5'-phosphate as a cofactor.

It is found in the mitochondrion. The enzyme catalyses N(6)-[(R)-lipoyl]-L-lysyl-[glycine-cleavage complex H protein] + glycine + H(+) = N(6)-[(R)-S(8)-aminomethyldihydrolipoyl]-L-lysyl-[glycine-cleavage complex H protein] + CO2. Its function is as follows. The glycine cleavage system catalyzes the degradation of glycine. The P protein binds the alpha-amino group of glycine through its pyridoxal phosphate cofactor; CO(2) is released and the remaining methylamine moiety is then transferred to the lipoamide cofactor of the H protein. This Solanum tuberosum (Potato) protein is Glycine dehydrogenase (decarboxylating), mitochondrial (GDCSP).